A 166-amino-acid chain; its full sequence is 2-C-methyl-D-erythritol 2,4-cyclodiphosphate synthase (166 aa).

Residues aspartate 11 and histidine 13 each contribute to the a divalent metal cation site. 4-CDP-2-C-methyl-D-erythritol 2-phosphate-binding positions include 11–13 (DVH) and 40–41 (HS). Residue histidine 48 coordinates a divalent metal cation. 4-CDP-2-C-methyl-D-erythritol 2-phosphate-binding positions include 62–64 (DLG), 135–138 (TTSD), phenylalanine 142, and arginine 145.

This sequence belongs to the IspF family. In terms of assembly, homotrimer. It depends on a divalent metal cation as a cofactor.

The catalysed reaction is 4-CDP-2-C-methyl-D-erythritol 2-phosphate = 2-C-methyl-D-erythritol 2,4-cyclic diphosphate + CMP. Its pathway is isoprenoid biosynthesis; isopentenyl diphosphate biosynthesis via DXP pathway; isopentenyl diphosphate from 1-deoxy-D-xylulose 5-phosphate: step 4/6. Involved in the biosynthesis of isopentenyl diphosphate (IPP) and dimethylallyl diphosphate (DMAPP), two major building blocks of isoprenoid compounds. Catalyzes the conversion of 4-diphosphocytidyl-2-C-methyl-D-erythritol 2-phosphate (CDP-ME2P) to 2-C-methyl-D-erythritol 2,4-cyclodiphosphate (ME-CPP) with a corresponding release of cytidine 5-monophosphate (CMP). This Pseudarthrobacter chlorophenolicus (strain ATCC 700700 / DSM 12829 / CIP 107037 / JCM 12360 / KCTC 9906 / NCIMB 13794 / A6) (Arthrobacter chlorophenolicus) protein is 2-C-methyl-D-erythritol 2,4-cyclodiphosphate synthase.